Consider the following 410-residue polypeptide: Translation initiation factor 2 subunit gamma (410 aa).

In terms of domain architecture, tr-type G spans Gln9 to Lys202. The segment at Gly18–Thr25 is G1. Residues Asp21, Thr25, Gly46, and Thr48 each contribute to the Mg(2+) site. Residue Asp21 to Thr26 participates in GTP binding. The segment at Gly46–Lys50 is G2. Zn(2+) contacts are provided by Cys61, Cys64, Cys73, and Cys76. The interval Asp90 to Gly93 is G3. Residues Asn145–Glu148 and Ser180–Leu182 each bind GTP. The G4 stretch occupies residues Asn145–Glu148. The interval Ser180–Leu182 is G5.

The protein belongs to the TRAFAC class translation factor GTPase superfamily. Classic translation factor GTPase family. EIF2G subfamily. As to quaternary structure, heterotrimer composed of an alpha, a beta and a gamma chain. Mg(2+) is required as a cofactor.

The catalysed reaction is GTP + H2O = GDP + phosphate + H(+). Functionally, eIF-2 functions in the early steps of protein synthesis by forming a ternary complex with GTP and initiator tRNA. The protein is Translation initiation factor 2 subunit gamma of Thermococcus kodakarensis (strain ATCC BAA-918 / JCM 12380 / KOD1) (Pyrococcus kodakaraensis (strain KOD1)).